The chain runs to 474 residues: RNA-binding protein Nova-1 (474 aa).

Positions 1 to 12 (MAAAPIQQNGTH) are enriched in polar residues. Residues 1–43 (MAAAPIQQNGTHTGVPIDLDPPDSRKRPLEAPPEAGSTKRTNT) are disordered. Residues 26-42 (KRPLEAPPEAGSTKRTN) carry the Bipartite nuclear localization signal motif. 3 consecutive KH domains span residues 48 to 115 (QYFL…HGFI), 146 to 212 (IKQV…VELI), and 396 to 463 (KDVV…QYLI). A required for RNA binding region spans residues 394–474 (GSKDVVEIAV…QRITYEQGVR (81 aa)).

In terms of assembly, interacts with PTBP2; the interaction is direct.

It is found in the nucleus. Functions to regulate alternative splicing in neurons by binding pre-mRNA in a sequence-specific manner to activate exon inclusion or exclusion. It binds specifically to the sequences 5'-YCAY-3' and regulates splicing in only a subset of regulated exons. Binding to an exonic 5'-YCAY-3' cluster changes the protein complexes assembled on pre-mRNA, blocking U1 snRNP binding and exon inclusion, whereas binding to an intronic 5'-YCAY-3' cluster enhances spliceosome assembly and exon inclusion. Binding to 5'-YCAY-3' clusters results in a local and asymmetric action to regulate spliceosome assembly and alternative splicing in neurons. Binding to an exonic 5'-YCAY-3' cluster changed the protein complexes assembled on pre-mRNA, blocking U1 snRNP (small nuclear ribonucleoprotein) binding and exon inclusion, whereas binding to an intronic 5'-YCAY-3' cluster enhanced spliceosome assembly and exon inclusion. With NOVA1, they perform unique biological functions in different brain areas and cell types. Autoregulates its own expression by acting as a splicing repressor. Acts to activate the inclusion of exon E3A in the glycine receptor alpha-2 chain and of exon E9 in gamma-aminobutyric-acid receptor gamma-2 subunit via a distal downstream UCAU-rich intronic splicing enhancer. Acts to regulate a novel glycine receptor alpha-2 chain splice variant (alpha-2N) in developing spinal cord. The protein is RNA-binding protein Nova-1 of Rattus norvegicus (Rat).